Consider the following 347-residue polypeptide: Homoisocitrate dehydrogenase (347 aa).

NADH is bound at residue 68–70; it reads ITS. A (2R,3S)-homoisocitrate-binding site is contributed by Ser70. The residue at position 81 (Ser81) is a Phosphoserine. Arg87, Arg97, Arg128, Tyr135, Lys181, and Asn183 together coordinate (2R,3S)-homoisocitrate. Asn183 serves as a coordination point for NADH. 3 residues coordinate Mg(2+): Asp213, Asp237, and Asp241. NADH-binding positions include 270 to 274 and Asn282; that span reads GSAPD.

This sequence belongs to the isocitrate and isopropylmalate dehydrogenases family. Mg(2+) serves as cofactor.

The catalysed reaction is (2R,3S)-homoisocitrate + NAD(+) = 2-oxoadipate + CO2 + NADH. It carries out the reaction (2R,3S)-iso(homo)2citrate + NAD(+) = 2-oxoheptanedioate + CO2 + NADH. It catalyses the reaction (2R,3S)-iso(homo)3citrate + NAD(+) = 2-oxosuberate + CO2 + NADH. It functions in the pathway organic acid metabolism; 2-oxosuberate biosynthesis. Its function is as follows. Catalyzes the NAD-dependent oxidation and decarboxylation of (2R,3S)-homoisocitrate, (2R,3S)-homo(2)-isocitrate and (2R,3S)-homo(3)-isocitrate, into 2-oxoadipate, 2-oxopimelate (2-oxoheptanedioate), and 2-oxosuberate, respectively. All these substrates are intermediates in the biosynthesis of biotin and of 7-mercaptoheptanoate, a moiety of coenzyme B in methanoarchaea. Is also able to produce 2-oxoazelate from (2R,3S)-homo(4)-isocitrate in vitro, but this substrate is probably not physiologically relevant. Is unable to use any isomer of isocitrate or isopropylmalate as a substrate, and NADP as an oxidant. The chain is Homoisocitrate dehydrogenase (aksF) from Methanocaldococcus jannaschii (strain ATCC 43067 / DSM 2661 / JAL-1 / JCM 10045 / NBRC 100440) (Methanococcus jannaschii).